Consider the following 767-residue polypeptide: Photosystem I P700 chlorophyll a apoprotein A1 (767 aa).

A disordered region spans residues Met-1–Ala-22. Residues Ser-8–Ala-22 are compositionally biased toward basic and acidic residues. A run of 8 helical transmembrane segments spans residues Ile-76 to Ala-99, Leu-162 to His-185, Leu-201 to Ala-225, Val-309 to Tyr-327, Arg-368 to Tyr-391, Leu-407 to Val-433, Ala-455 to His-477, and Leu-558 to Leu-576. [4Fe-4S] cluster-binding residues include Cys-600 and Cys-609. 2 helical membrane-spanning segments follow: residues His-616–Trp-637 and Ile-681–Phe-703. Residue His-692 coordinates divinylchlorophyll a'. Met-700 and Tyr-708 together coordinate divinyl chlorophyll a. Trp-709 is a phylloquinone binding site. Residues Ala-741 to Ala-761 traverse the membrane as a helical segment.

It belongs to the PsaA/PsaB family. The PsaA/B heterodimer binds the P700 divinyl chlorophyll special pair and subsequent electron acceptors. PSI consists of a core antenna complex that captures photons, and an electron transfer chain that converts photonic excitation into a charge separation. The cyanobacterial PSI reaction center is composed of one copy each of PsaA,B,C,D,E,F,I,J,K,L,M and X, and forms trimeric complexes. The cofactor is PSI electron transfer chain: 5 divinyl chlorophyll a, 1 divinyl chlorophyll a', 2 phylloquinones and 3 4Fe-4S clusters. PSI core antenna: 90 divinyl chlorophyll a, 22 carotenoids, 3 phospholipids and 1 galactolipid. P700 is a divinyl chlorophyll a/divinyl chlorophyll a' dimer, A0 is one or more divinyl chlorophyll a, A1 is one or both phylloquinones and FX is a shared 4Fe-4S iron-sulfur center..

It is found in the cellular thylakoid membrane. It catalyses the reaction reduced [plastocyanin] + hnu + oxidized [2Fe-2S]-[ferredoxin] = oxidized [plastocyanin] + reduced [2Fe-2S]-[ferredoxin]. In terms of biological role, psaA and PsaB bind P700, the primary electron donor of photosystem I (PSI), as well as the electron acceptors A0, A1 and FX. PSI is a plastocyanin/cytochrome c6-ferredoxin oxidoreductase, converting photonic excitation into a charge separation, which transfers an electron from the donor P700 chlorophyll pair to the spectroscopically characterized acceptors A0, A1, FX, FA and FB in turn. Oxidized P700 is reduced on the lumenal side of the thylakoid membrane by plastocyanin or cytochrome c6. The protein is Photosystem I P700 chlorophyll a apoprotein A1 of Prochlorococcus marinus (strain AS9601).